Here is a 219-residue protein sequence, read N- to C-terminus: Ras-related protein Rab-3D (219 aa).

Position 2 is an N-acetylalanine (A2). 29-37 is a GDP binding site; that stretch reads GNSSVGKTS. Residues S31, S32, V33, G34, K35, T36, S37, P49, and S53 each coordinate GTP. Residue T36 participates in Mg(2+) binding. The Switch 1 signature appears at 49 to 58; sequence PAFVSTVGID. 2 residues coordinate Mg(2+): T54 and D77. GTP is bound at residue G80. Residues 80–96 carry the Switch 2 motif; it reads GQERYRTITTAYYRGAM. T86 is modified (phosphothreonine; by LRRK2). Positions 135, 136, 138, 166, and 167 each coordinate GTP. GDP is bound by residues 135 to 138 and 165 to 167; these read NKCD and SAK. S190 carries the phosphoserine modification. The tract at residues 190–219 is disordered; the sequence is SLEPSSSPGSNGKGPALGDTPPPQPSSCSC. Positions 193–203 are enriched in low complexity; it reads PSSSPGSNGKG. The segment covering 209–219 has biased composition (pro residues); it reads TPPPQPSSCSC. S-geranylgeranyl cysteine attachment occurs at residues C217 and C219. C219 bears the Cysteine methyl ester mark.

It belongs to the small GTPase superfamily. Rab family. Interacts with RIMS1, RIMS2, RPH3A, RPH3AL and RAB3IP. The GTP-bound form interacts with REP15. Interacts with CHM and CHML; phosphorylation at Thr-86 disrupts these interactions. Interacts with MADD (via uDENN domain); the GTP-bound form is preferred for interaction. Mg(2+) is required as a cofactor. In terms of processing, phosphorylation of Thr-86 in the switch II region by LRRK2 prevents the association of RAB regulatory proteins, including CHM and CHML. As to expression, predominantly expressed in the adipocyte tissue, but is also expressed in several other organs including skin, spleen, heart and lung.

It localises to the cell membrane. The enzyme catalyses GTP + H2O = GDP + phosphate + H(+). With respect to regulation, regulated by guanine nucleotide exchange factors (GEFs) which promote the exchange of bound GDP for free GTP. Regulated by GTPase activating proteins (GAPs) which increase the GTP hydrolysis activity. Inhibited by GDP dissociation inhibitors (GDIs) which prevent Rab-GDP dissociation. Its function is as follows. The small GTPases Rab are key regulators of intracellular membrane trafficking, from the formation of transport vesicles to their fusion with membranes. Rabs cycle between an inactive GDP-bound form and an active GTP-bound form that is able to recruit to membranes different sets of downstream effectors directly responsible for vesicle formation, movement, tethering and fusion. RAB3D may be involved in the insulin-induced exocytosis of GLUT4-containing vesicles in adipocytes. The protein is Ras-related protein Rab-3D of Mus musculus (Mouse).